A 271-amino-acid polypeptide reads, in one-letter code: Formamidopyrimidine-DNA glycosylase (271 aa).

Catalysis depends on proline 2, which acts as the Schiff-base intermediate with DNA. The Proton donor role is filled by glutamate 3. Residue lysine 57 is the Proton donor; for beta-elimination activity of the active site. Residues histidine 90, arginine 109, and lysine 151 each coordinate DNA. Residues 236–270 (HVYGRGGDTCTHCGQLLSEIRLGQRATVFCSICQQ) form an FPG-type zinc finger. Arginine 260 serves as the catalytic Proton donor; for delta-elimination activity.

Belongs to the FPG family. As to quaternary structure, monomer. Zn(2+) is required as a cofactor.

The catalysed reaction is Hydrolysis of DNA containing ring-opened 7-methylguanine residues, releasing 2,6-diamino-4-hydroxy-5-(N-methyl)formamidopyrimidine.. It catalyses the reaction 2'-deoxyribonucleotide-(2'-deoxyribose 5'-phosphate)-2'-deoxyribonucleotide-DNA = a 3'-end 2'-deoxyribonucleotide-(2,3-dehydro-2,3-deoxyribose 5'-phosphate)-DNA + a 5'-end 5'-phospho-2'-deoxyribonucleoside-DNA + H(+). Involved in base excision repair of DNA damaged by oxidation or by mutagenic agents. Acts as a DNA glycosylase that recognizes and removes damaged bases. Has a preference for oxidized purines, such as 7,8-dihydro-8-oxoguanine (8-oxoG). Has AP (apurinic/apyrimidinic) lyase activity and introduces nicks in the DNA strand. Cleaves the DNA backbone by beta-delta elimination to generate a single-strand break at the site of the removed base with both 3'- and 5'-phosphates. In Shewanella piezotolerans (strain WP3 / JCM 13877), this protein is Formamidopyrimidine-DNA glycosylase.